The primary structure comprises 203 residues: Transmembrane emp24 domain-containing protein (203 aa).

An N-terminal signal peptide occupies residues M1–C22. At Y23–R170 the chain is on the lumenal side. A GOLD domain is found at E32–I114. A helical transmembrane segment spans residues V171–Y191. At Y192–V203 the chain is on the cytoplasmic side.

Belongs to the EMP24/GP25L family.

The protein localises to the cytoplasmic vesicle membrane. Could have a role in the budding of coatomer-coated and other species of coated vesicles. The chain is Transmembrane emp24 domain-containing protein from Nematostella vectensis (Starlet sea anemone).